The primary structure comprises 599 residues: Glutamine--fructose-6-phosphate aminotransferase [isomerizing] (599 aa).

The active-site Nucleophile; for GATase activity is cysteine 2. The Glutamine amidotransferase type-2 domain occupies 2 to 223 (CGIIGYIGNE…DRDIVILRKE (222 aa)). SIS domains follow at residues 286–423 (LGKE…IIGK) and 452–589 (IAEE…VDKP). Lysine 594 acts as the For Fru-6P isomerization activity in catalysis.

As to quaternary structure, homodimer.

It is found in the cytoplasm. The enzyme catalyses D-fructose 6-phosphate + L-glutamine = D-glucosamine 6-phosphate + L-glutamate. Catalyzes the first step in hexosamine metabolism, converting fructose-6P into glucosamine-6P using glutamine as a nitrogen source. The protein is Glutamine--fructose-6-phosphate aminotransferase [isomerizing] (glmS) of Methanococcus maripaludis (strain DSM 14266 / JCM 13030 / NBRC 101832 / S2 / LL).